A 541-amino-acid polypeptide reads, in one-letter code: Propionyl-CoA carboxylase beta chain, mitochondrial (541 aa).

Residues 1 to 28 constitute a mitochondrion transit peptide; the sequence is MAAVIRIRAMAAGTRLRVLNCGLGTTIR. The 259-residue stretch at 34–292 folds into the CoA carboxyltransferase N-terminal domain; the sequence is PVSVNERIEN…SNQDPASIRE (259 aa). The segment at 34 to 535 is carboxyltransferase; it reads PVSVNERIEN…SKKVHRPWRK (502 aa). Serine 73 carries the post-translational modification Phosphoserine. N6-acetyllysine; alternate is present on lysine 101. Lysine 101 carries the N6-succinyllysine; alternate modification. N6-succinyllysine is present on lysine 250. The CoA carboxyltransferase C-terminal domain occupies 296-535; the sequence is PSDRLVPELD…SKKVHRPWRK (240 aa). The acyl-CoA binding stretch occupies residues 327–360; sequence DEREFFEIMPNYAKNIVIGFARMNGRTVGIVGNQ. Lysine 476 and lysine 491 each carry N6-acetyllysine; alternate. N6-succinyllysine; alternate occurs at positions 476 and 491.

This sequence belongs to the AccD/PCCB family. The holoenzyme is a dodecamer composed of 6 PCCA/alpha subunits and 6 PCCB/beta subunits.

The protein localises to the mitochondrion matrix. It carries out the reaction propanoyl-CoA + hydrogencarbonate + ATP = (S)-methylmalonyl-CoA + ADP + phosphate + H(+). The catalysed reaction is butanoyl-CoA + hydrogencarbonate + ATP = (2S)-ethylmalonyl-CoA + ADP + phosphate + H(+). Its pathway is metabolic intermediate metabolism; propanoyl-CoA degradation; succinyl-CoA from propanoyl-CoA: step 1/3. Its function is as follows. This is one of the 2 subunits of the biotin-dependent propionyl-CoA carboxylase (PCC), a mitochondrial enzyme involved in the catabolism of odd chain fatty acids, branched-chain amino acids isoleucine, threonine, methionine, and valine and other metabolites. Propionyl-CoA carboxylase catalyzes the carboxylation of propionyl-CoA/propanoyl-CoA to D-methylmalonyl-CoA/(S)-methylmalonyl-CoA. Within the holoenzyme, the alpha subunit catalyzes the ATP-dependent carboxylation of the biotin carried by the biotin carboxyl carrier (BCC) domain, while the beta subunit then transfers the carboxyl group from carboxylated biotin to propionyl-CoA. Propionyl-CoA carboxylase also significantly acts on butyryl-CoA/butanoyl-CoA, which is converted to ethylmalonyl-CoA/(2S)-ethylmalonyl-CoA. Other alternative minor substrates include (2E)-butenoyl-CoA/crotonoyl-CoA. This Rattus norvegicus (Rat) protein is Propionyl-CoA carboxylase beta chain, mitochondrial.